The chain runs to 194 residues: 3-isopropylmalate dehydratase small subunit (194 aa).

This sequence belongs to the LeuD family. LeuD type 1 subfamily. In terms of assembly, heterodimer of LeuC and LeuD.

The enzyme catalyses (2R,3S)-3-isopropylmalate = (2S)-2-isopropylmalate. Its pathway is amino-acid biosynthesis; L-leucine biosynthesis; L-leucine from 3-methyl-2-oxobutanoate: step 2/4. Catalyzes the isomerization between 2-isopropylmalate and 3-isopropylmalate, via the formation of 2-isopropylmaleate. The sequence is that of 3-isopropylmalate dehydratase small subunit from Bacillus cereus (strain ATCC 14579 / DSM 31 / CCUG 7414 / JCM 2152 / NBRC 15305 / NCIMB 9373 / NCTC 2599 / NRRL B-3711).